A 346-amino-acid polypeptide reads, in one-letter code: Biotin synthase (346 aa).

The segment covering 1–12 (MPDTATVSSESE) has biased composition (polar residues). The disordered stretch occupies residues 1–21 (MPDTATVSSESEFSGHAHVAA). A Radical SAM core domain is found at 64–292 (NKVQLCSLLS…QSMVRLSAGR (229 aa)). The [4Fe-4S] cluster site is built by Cys-79, Cys-83, and Cys-86. [2Fe-2S] cluster contacts are provided by Cys-123, Cys-155, Cys-215, and Arg-287.

This sequence belongs to the radical SAM superfamily. Biotin synthase family. In terms of assembly, homodimer. It depends on [4Fe-4S] cluster as a cofactor. Requires [2Fe-2S] cluster as cofactor.

The enzyme catalyses (4R,5S)-dethiobiotin + (sulfur carrier)-SH + 2 reduced [2Fe-2S]-[ferredoxin] + 2 S-adenosyl-L-methionine = (sulfur carrier)-H + biotin + 2 5'-deoxyadenosine + 2 L-methionine + 2 oxidized [2Fe-2S]-[ferredoxin]. It participates in cofactor biosynthesis; biotin biosynthesis; biotin from 7,8-diaminononanoate: step 2/2. In terms of biological role, catalyzes the conversion of dethiobiotin (DTB) to biotin by the insertion of a sulfur atom into dethiobiotin via a radical-based mechanism. This is Biotin synthase from Myxococcus xanthus (strain DK1622).